The chain runs to 190 residues: Peptidyl-tRNA hydrolase (190 aa).

Residue phenylalanine 14 participates in tRNA binding. Histidine 19 serves as the catalytic Proton acceptor. TRNA contacts are provided by methionine 64, asparagine 66, and asparagine 112.

The protein belongs to the PTH family. In terms of assembly, monomer.

Its subcellular location is the cytoplasm. It catalyses the reaction an N-acyl-L-alpha-aminoacyl-tRNA + H2O = an N-acyl-L-amino acid + a tRNA + H(+). In terms of biological role, hydrolyzes ribosome-free peptidyl-tRNAs (with 1 or more amino acids incorporated), which drop off the ribosome during protein synthesis, or as a result of ribosome stalling. Functionally, catalyzes the release of premature peptidyl moieties from peptidyl-tRNA molecules trapped in stalled 50S ribosomal subunits, and thus maintains levels of free tRNAs and 50S ribosomes. This is Peptidyl-tRNA hydrolase from Staphylococcus saprophyticus subsp. saprophyticus (strain ATCC 15305 / DSM 20229 / NCIMB 8711 / NCTC 7292 / S-41).